Reading from the N-terminus, the 205-residue chain is Ribonuclease HII (205 aa).

One can recognise an RNase H type-2 domain in the interval 16-205; that stretch reads VSEVGIDEVG…KSFLKKSNLF (190 aa). A divalent metal cation-binding residues include Asp-22, Glu-23, and Asp-118.

Belongs to the RNase HII family. It depends on Mn(2+) as a cofactor. Mg(2+) is required as a cofactor.

It is found in the cytoplasm. It carries out the reaction Endonucleolytic cleavage to 5'-phosphomonoester.. Functionally, endonuclease that specifically degrades the RNA of RNA-DNA hybrids. This chain is Ribonuclease HII, found in Prochlorococcus marinus (strain MIT 9215).